The following is a 106-amino-acid chain: Small ribosomal subunit protein uS10 (106 aa).

This sequence belongs to the universal ribosomal protein uS10 family. As to quaternary structure, part of the 30S ribosomal subunit.

Functionally, involved in the binding of tRNA to the ribosomes. In Pyrobaculum arsenaticum (strain DSM 13514 / JCM 11321 / PZ6), this protein is Small ribosomal subunit protein uS10.